The sequence spans 366 residues: Peptide chain release factor 1 (366 aa).

Gln-239 is subject to N5-methylglutamine.

The protein belongs to the prokaryotic/mitochondrial release factor family. Methylated by PrmC. Methylation increases the termination efficiency of RF1.

The protein localises to the cytoplasm. In terms of biological role, peptide chain release factor 1 directs the termination of translation in response to the peptide chain termination codons UAG and UAA. The polypeptide is Peptide chain release factor 1 (Baumannia cicadellinicola subsp. Homalodisca coagulata).